A 1070-amino-acid chain; its full sequence is DNA-directed RNA polymerase subunit beta (1070 aa).

It belongs to the RNA polymerase beta chain family. In plastids the minimal PEP RNA polymerase catalytic core is composed of four subunits: alpha, beta, beta', and beta''. When a (nuclear-encoded) sigma factor is associated with the core the holoenzyme is formed, which can initiate transcription.

Its subcellular location is the plastid. The protein localises to the chloroplast. The catalysed reaction is RNA(n) + a ribonucleoside 5'-triphosphate = RNA(n+1) + diphosphate. DNA-dependent RNA polymerase catalyzes the transcription of DNA into RNA using the four ribonucleoside triphosphates as substrates. This is DNA-directed RNA polymerase subunit beta from Vitis vinifera (Grape).